The sequence spans 247 residues: ATP synthase subunit a, chloroplastic (247 aa).

The next 5 helical transmembrane spans lie at 38–58, 95–115, 134–154, 199–219, and 220–240; these read QVLITSWVVIAILLGSATLAV, VPFIGTMFLFIFVSNWSGALL, INTTVALALLTSVAYFYAGLT, LVVVVLVSLVPSIVPIPVMFL, and GLFTSGIQALIFATLAAAYIG.

The protein belongs to the ATPase A chain family. In terms of assembly, F-type ATPases have 2 components, CF(1) - the catalytic core - and CF(0) - the membrane proton channel. CF(1) has five subunits: alpha(3), beta(3), gamma(1), delta(1), epsilon(1). CF(0) has four main subunits: a, b, b' and c.

The protein resides in the plastid. Its subcellular location is the chloroplast thylakoid membrane. Functionally, key component of the proton channel; it plays a direct role in the translocation of protons across the membrane. The polypeptide is ATP synthase subunit a, chloroplastic (Vitis vinifera (Grape)).